The sequence spans 599 residues: Nucleoporin p58/p45 (599 aa).

Repeat copies occupy residues 7-8, 30-31, 44-45, 63-64, and 68-69. A 14 X 2 AA repeats of F-G region spans residues 7–579; it reads FGSGTLGSTT…VSNPASAGFG (573 aa). Residues 213-247 form a disordered region; that stretch reads NEGLGGIDFSSSSDKKSDKTGTRPEDSKALKDENL. The segment covering 225–246 has biased composition (basic and acidic residues); the sequence is SDKKSDKTGTRPEDSKALKDEN. Coiled-coil stretches lie at residues 256–276 and 314–381; these read ENLQ…SRMS and ETAQ…SHIT. A Phosphothreonine modification is found at Thr331. A run of 9 repeats spans residues 488 to 489, 492 to 493, 513 to 514, 519 to 520, 529 to 530, 531 to 532, 545 to 546, 568 to 569, and 578 to 579. The disordered stretch occupies residues 579 to 599; the sequence is GTGGQLLQLKKPPAGNKRGKR.

The protein belongs to the NUP58 family. Component of the p62 complex, a complex at least composed of NUP62, NUP54, and NUP58. Interacts with NUTF2. Interacts with SRP1-alpha and Importin p97 proteins when they are together, but not with SRP1-alpha protein alone. In terms of processing, O-glycosylated.

The protein resides in the nucleus. It localises to the nuclear pore complex. It is found in the nucleus membrane. Its function is as follows. Component of the nuclear pore complex, a complex required for the trafficking across the nuclear membrane. The polypeptide is Nucleoporin p58/p45 (Homo sapiens (Human)).